The primary structure comprises 742 residues: Two pore calcium channel protein 1 (742 aa).

Positions 1-37 (MSEAEAPLITEEAAERGLASSGSRRLSDGAGGQGSRK) are disordered. The Cytoplasmic segment spans residues 1-82 (MSEAEAPLIT…NDTRFGRAMS (82 aa)). A helical membrane pass occupies residues 83–103 (FYFVYLRLDWLWSLNLFALIL). The Extracellular portion of the chain corresponds to 104–140 (LNFLEKPLWCRKDALQAYDQRDLYFLGQLPYFSKTES). Residues 141–161 (LIYEGLTLVILVMDIFCPLSY) form a helical membrane-spanning segment. Topologically, residues 162–176 (EGLNIFWRSTTNKLK) are cytoplasmic. Residues 177–197 (IVLLFILACDILVFAFSSQPF) form a helical membrane-spanning segment. Residues 198 to 204 (RLAPYIR) lie on the Extracellular side of the membrane. Residues 205–226 (VVFLIMTIRELRMCAITLAGLI) form a helical; Voltage-sensor membrane-spanning segment. Residues 227–247 (GTYLNVLALSLLFLLFASWLA) form a helical membrane-spanning segment. Residues 248-258 (YVTFEDTPQGK) are Extracellular-facing. Residues 259-273 (TIFSSYGVTLYQMFV) constitute an intramembrane region (pore-forming). The Extracellular portion of the chain corresponds to 274–296 (LFTTSNNPDVWVHAYKIPRWYSL). A helical membrane pass occupies residues 297-317 (FFIVYVLLGVYFLTNLILAVI). At 318–446 (YDSFKEQFAK…SFVRSRMFEY (129 aa)) the chain is on the cytoplasmic side. 2 EF-hand domains span residues 335–370 (IRKN…LNKY) and 376–411 (TSRE…IAIK). Residues 447–467 (IIVFVLLINLVAVIIETTLDI) form a helical membrane-spanning segment. Over 468 to 480 (ENSSSQETWQEVE) the chain is Extracellular. The N-linked (GlcNAc...) asparagine glycan is linked to N469. A helical transmembrane segment spans residues 481 to 501 (FFLGWIYVAEMALKIFSLGFG). At 502-510 (AYWMEGQNK) the chain is on the cytoplasmic side. The chain crosses the membrane as a helical span at residues 511 to 531 (FDFVLTWTIFIGETLTFAFPS). Residues 532-540 (KLPFLSNGE) lie on the Extracellular side of the membrane. A helical; Voltage-sensor transmembrane segment spans residues 541 to 558 (WIRYLLLGRVLRLTRILL). Over 559-582 (QVQRFRAFVATFFTLMSSLMPYLG) the chain is Cytoplasmic. Residues 583–603 (IVFCVLCMYCSIGLQIFGGIV) traverse the membrane as a helical segment. The Extracellular portion of the chain corresponds to 604–627 (YAGNPTLEETDLFNNDYLLFNFND). Positions 628-642 (YPSGMVTLFNLLVMG) form an intramembrane region, pore-forming. Residues 643-663 (NWQVWMESYWQLTGTSWSLIY) lie on the Extracellular side of the membrane. The chain crosses the membrane as a helical span at residues 664-684 (FVSFYLISILLLLNLIVAFVL). Over 685-742 (EAFFAEMELEKGEEVDIQNPTSGGIKKRRSMRVRSKGTMVDILLHHMLSNELDGSQNS) the chain is Cytoplasmic.

Belongs to the calcium channel alpha-1 subunit (TC 1.A.1.11) family. Two pore calcium channel subfamily. As to quaternary structure, homodimer.

It is found in the membrane. Its activity is regulated as follows. Inhibited by Al(3+). Functionally, functions as a voltage-gated inward-rectifying Ca(2+) channel (VDCC) across the plasma membrane that mediates sucrose-induced Ca(2+) influx in autotrophically grown leaf cells. Acts as the major ROS-responsive Ca(2+) channel and is the possible target of Al-dependent inhibition. Plays a regulatory role in defense responses. The polypeptide is Two pore calcium channel protein 1 (TPC1) (Triticum aestivum (Wheat)).